Reading from the N-terminus, the 160-residue chain is Putative antiporter subunit mnhE2 (160 aa).

3 helical membrane-spanning segments follow: residues 22–42, 61–81, and 102–122; these read SFQFSTFVSGFIIGLIVIYIL, FLGVYLYQLITSSISIINYIL, and WAITFLTILIIITPGSTVIRI.

This sequence belongs to the CPA3 antiporters (TC 2.A.63) subunit E family. May form a heterooligomeric complex that consists of seven subunits: mnhA2, mnhB2, mnhC2, mnhD2, mnhE2, mnhF2 and mnhG2.

It is found in the cell membrane. The sequence is that of Putative antiporter subunit mnhE2 (mnhE2) from Staphylococcus haemolyticus (strain JCSC1435).